Here is a 611-residue protein sequence, read N- to C-terminus: Polyphenol oxidase 4 (611 aa).

Cu cation-binding residues include His-57, His-82, His-91, His-251, His-255, and His-283. The segment at residues 80 to 82 is a cross-link (2'-(S-cysteinyl)-histidine (Cys-His)); the sequence is CTH. Residue His-255 coordinates substrate. The propeptide at 380–611 is removed in mature form; it reads IKKSEGGKNP…GGLGALGRIF (232 aa).

Belongs to the tyrosinase family. As to quaternary structure, heterotetramer. It depends on Cu(2+) as a cofactor. The C-ter is probably cleaved after Gly-379 since the mature active protein is smaller than the protein encoded by the gene.

The catalysed reaction is 2 L-dopa + O2 = 2 L-dopaquinone + 2 H2O. The enzyme catalyses L-tyrosine + O2 = L-dopaquinone + H2O. Copper-containing oxidase that catalyzes both the o-hydroxylation of monophenols and the subsequent oxidation of the resulting o-diphenols into reactive o-quinones, which evolve spontaneously to produce intermediates, which associate in dark brown pigments. Involved in the initial step of melanin synthesis. Melanins constitute a mechanism of defense and resistance to stress such as UV radiations, free radicals, gamma rays, dehydratation and extreme temperatures, and contribute to the fungal cell-wall resistance against hydrolytic enzymes in avoiding cellular lysis. Fungal pigments are also involved in the formation and stability of spores. This chain is Polyphenol oxidase 4 (PPO4), found in Agaricus bisporus (White button mushroom).